A 512-amino-acid polypeptide reads, in one-letter code: MGCIKSKGKDSLSDDGVDLKTQPVRNTERTIYVRDPTSNKQQRPVPESQLLPGQRFQTKDPEEQGDIVVALYPYDGIHPDDLSFKKGEKMKVLEEHGEWWKAKSLLTKKEGFIPSNYVAKLNTLETEEWFFKDITRKDAERQLLAPGNSAGAFLIRESETLKGSFSLSVRDFDPVHGDVIKHYKIRSLDNGGYYISPRITFPCISDMIKHYQKQADGLCRRLEKACISPKPQKPWDKDAWEIPRESIKLVKRLGAGQFGEVWMGYYNNSTKVAVKTLKPGTMSVQAFLEEANLMKTLQHDKLVRLYAVVTREEPIYIITEYMAKGSLLDFLKSDEGGKVLLPKLIDFSAQIAEGMAYIERKNYIHRDLRAANVLVSESLMCKIADFGLARVIEDNEYTAREGAKFPIKWTAPEAINFGCFTIKSDVWSFGILLYEIVTYGKIPYPGRTNADVMTALSQGYRMPRVENCPDELYDIMKMCWKEKAEERPTFDYLQSVLDDFYTATEGQYQQQP.

The tract at residues Met-1 to Glu-62 is disordered. Gly-2 carries N-myristoyl glycine lipidation. Cys-3 carries the S-palmitoyl cysteine lipid modification. A phosphoserine mark is found at Ser-11 and Ser-13. The SH3 domain maps to Glu-63–Thr-123. The 98-residue stretch at Trp-129–Cys-226 folds into the SH2 domain. Position 193 is a phosphotyrosine (Tyr-193). Position 228 is a phosphoserine (Ser-228). The Protein kinase domain maps to Ile-247–Tyr-501. Residues Leu-253–Val-261 and Lys-275 each bind ATP. 2 positions are modified to phosphotyrosine: Tyr-306 and Tyr-316. Asp-367 functions as the Proton acceptor in the catalytic mechanism. Tyr-397 is subject to Phosphotyrosine; by autocatalysis. 2 positions are modified to phosphotyrosine: Tyr-460 and Tyr-473. Residue Tyr-508 is modified to Phosphotyrosine; by autocatalysis, CSK and MATK.

It belongs to the protein kinase superfamily. Tyr protein kinase family. SRC subfamily. In terms of assembly, interacts with TEC. Interacts (via SH2 domain) with FLT3 (tyrosine phosphorylated). Interacts with LIME1 and with CD79A upon activation of the B-cell antigen receptor. Interacts with the B-cell receptor complex. Interacts with phosphorylated THEMIS2. Interacts with EPOR. Interacts with MS4A2/FCER1B. Interaction (via the SH2 and SH3 domains) with MUC1 is stimulated by IL7 and the subsequent phosphorylation increases the binding between MUC1 and CTNNB1/beta-catenin. Interacts with ADAM15. Interacts with NDFIP2 and more weakly with NDFIP1. Interacts with FASLG. Interacts with KIT. Interacts with HCLS1. Interacts with FCGR2B. Interacts with FCGR1A; the interaction may be indirect. Interacts with CD19, CD22, CD79A and CD79B. Interacts (via SH3 domain) with CBLC, PPP1R15A and PDE4A. Interacts with TGFB1I1. Interacts (via SH3 domain) with PIK3R1, the regulatory subunit of phosphatidylinositol 3-kinase; this interaction enhances phosphatidylinositol 3-kinase activity. Interacts with CSF2RB, the common subunit of the IL3, IL5 and CSF2 receptors. Interacts with PAG1; identified in a complex with PAG1 and STAT3. Interacts with ABL1. Interacts with PTPN6/SHP-1. Interacts (via SH3 domain) with SCIMP (via proline-rich region). This interaction facilitates the phosphorylation of SCIMP on 'Tyr-107', which enhances binding of SCIMP to TLR4, and consequently the phosphorylation of TLR4 in response to stimulation by lipopolysaccharide in macrophages. Interacts with LPXN (via LD motif 3) and the interaction is induced upon B-cell antigen receptor (BCR) activation. Interacts (via SH3-domain) with ANKRD54 (via ankyrin repeat region) in an activation-independent status of LYN. Forms a multiprotein complex with ANKRD54 and HCLS1. Interacts (via SH2 and SH3 domains) with UNC119; leading to LYN activation. Interacts with CD36. Interacts with LYN. Interacts with SKAP1 and FYB1; this interaction promotes the phosphorylation of CLNK. Interacts with BCAR1/CAS and NEDD9/HEF1. (Microbial infection) Interacts with Epstein-Barr virus LMP2A. As to quaternary structure, (Microbial infection) Interacts with Herpes virus saimiri tyrosine kinase interacting protein (Tip). Ubiquitinated by CBL, leading to its degradation. Ubiquitination is SH3-dependent. Post-translationally, autophosphorylated. Phosphorylated on tyrosine residues in response to KIT signaling. Phosphorylation at Tyr-397 is required for optimal activity. Phosphorylation at Tyr-508 inhibits kinase activity. Phosphorylated at Tyr-508 by CSK. Dephosphorylated by PTPRC/CD45. Becomes rapidly phosphorylated upon activation of the B-cell receptor and the immunoglobulin receptor FCGR1A. Phosphorylated in response to ITGB1 in B-cells. Detected in monocytes (at protein level). Detected in placenta, and in fetal brain, lung, liver and kidney. Widely expressed in a variety of organs, tissues, and cell types such as epidermoid, hematopoietic, and neuronal cells. Expressed in primary neuroblastoma tumors.

It localises to the cell membrane. The protein resides in the nucleus. Its subcellular location is the cytoplasm. It is found in the perinuclear region. The protein localises to the golgi apparatus. It localises to the membrane. The enzyme catalyses L-tyrosyl-[protein] + ATP = O-phospho-L-tyrosyl-[protein] + ADP + H(+). With respect to regulation, subject to autoinhibition, mediated by intramolecular interactions between the SH2 domain and the C-terminal phosphotyrosine. Phosphorylation at Tyr-397 is required for optimal activity. Phosphorylated by CSK at Tyr-508; phosphorylation at Tyr-508 inhibits kinase activity. Kinase activity is modulated by dephosphorylation by PTPRC/CD45. Inhibited by Dasatinib, PP2, and SU6656. Functionally, non-receptor tyrosine-protein kinase that transmits signals from cell surface receptors and plays an important role in the regulation of innate and adaptive immune responses, hematopoiesis, responses to growth factors and cytokines, integrin signaling, but also responses to DNA damage and genotoxic agents. Functions primarily as negative regulator, but can also function as activator, depending on the context. Required for the initiation of the B-cell response, but also for its down-regulation and termination. Plays an important role in the regulation of B-cell differentiation, proliferation, survival and apoptosis, and is important for immune self-tolerance. Acts downstream of several immune receptors, including the B-cell receptor, CD79A, CD79B, CD5, CD19, CD22, FCER1, FCGR2, FCGR1A, TLR2 and TLR4. Plays a role in the inflammatory response to bacterial lipopolysaccharide. Mediates the responses to cytokines and growth factors in hematopoietic progenitors, platelets, erythrocytes, and in mature myeloid cells, such as dendritic cells, neutrophils and eosinophils. Acts downstream of EPOR, KIT, MPL, the chemokine receptor CXCR4, as well as the receptors for IL3, IL5 and CSF2. Plays an important role in integrin signaling. Regulates cell proliferation, survival, differentiation, migration, adhesion, degranulation, and cytokine release. Involved in the regulation of endothelial activation, neutrophil adhesion and transendothelial migration. Down-regulates signaling pathways by phosphorylation of immunoreceptor tyrosine-based inhibitory motifs (ITIM), that then serve as binding sites for phosphatases, such as PTPN6/SHP-1, PTPN11/SHP-2 and INPP5D/SHIP-1, that modulate signaling by dephosphorylation of kinases and their substrates. Phosphorylates LIME1 in response to CD22 activation. Phosphorylates BTK, CBL, CD5, CD19, CD72, CD79A, CD79B, CSF2RB, DOK1, HCLS1, LILRB3/PIR-B, MS4A2/FCER1B, SYK and TEC. Promotes phosphorylation of SIRPA, PTPN6/SHP-1, PTPN11/SHP-2 and INPP5D/SHIP-1. Mediates phosphorylation of the BCR-ABL fusion protein. Required for rapid phosphorylation of FER in response to FCER1 activation. Mediates KIT phosphorylation. Acts as an effector of EPOR (erythropoietin receptor) in controlling KIT expression and may play a role in erythroid differentiation during the switch between proliferation and maturation. Depending on the context, activates or inhibits several signaling cascades. Regulates phosphatidylinositol 3-kinase activity and AKT1 activation. Regulates activation of the MAP kinase signaling cascade, including activation of MAP2K1/MEK1, MAPK1/ERK2, MAPK3/ERK1, MAPK8/JNK1 and MAPK9/JNK2. Mediates activation of STAT5A and/or STAT5B. Phosphorylates LPXN on 'Tyr-72'. Kinase activity facilitates TLR4-TLR6 heterodimerization and signal initiation. Phosphorylates SCIMP on 'Tyr-107'; this enhances binding of SCIMP to TLR4, promoting the phosphorylation of TLR4, and a selective cytokine response to lipopolysaccharide in macrophages. Phosphorylates CLNK. Phosphorylates BCAR1/CAS and NEDD9/HEF1. The sequence is that of Tyrosine-protein kinase Lyn (LYN) from Homo sapiens (Human).